The primary structure comprises 357 residues: Aurora kinase A- and ninein-interacting protein (357 aa).

Positions 71–91 are enriched in polar residues; it reads LQPGKTNGSDQKSVSSHTESQ. A disordered region spans residues 71 to 98; it reads LQPGKTNGSDQKSVSSHTESQINKESKK. Residues 187 to 357 are interaction with AURKA; sequence RKEEKGDSAR…EGNQVIRHQF (171 aa). 2 positions are modified to phosphoserine: serine 267 and serine 292. An interaction with RBBP8/CtIP region spans residues 281 to 357; that stretch reads KDSWSQLFTE…EGNQVIRHQF (77 aa).

Belongs to the AUNIP family. Interacts (via C-terminus) with AURKA (via C-terminus). Interacts (via N-terminus) with NIN; this interaction blocks NIN phosphorylation by both AURKA and GSK3B. Identified in a complex with NIN and AURKA. Interacts with RBBP8/CtIP. Expressed in heart, skeletal muscles, placenta and testis.

It localises to the nucleus. It is found in the chromosome. The protein localises to the cytoplasm. The protein resides in the cytoskeleton. Its subcellular location is the microtubule organizing center. It localises to the centrosome. It is found in the spindle pole. Functionally, DNA-binding protein that accumulates at DNA double-strand breaks (DSBs) following DNA damage and promotes DNA resection and homologous recombination. Serves as a sensor of DNA damage: binds DNA with a strong preference for DNA substrates that mimic structures generated at stalled replication forks, and anchors RBBP8/CtIP to DSB sites to promote DNA end resection and ensuing homologous recombination repair. Inhibits non-homologous end joining (NHEJ). Required for the dynamic movement of AURKA at the centrosomes and spindle apparatus during the cell cycle. In Homo sapiens (Human), this protein is Aurora kinase A- and ninein-interacting protein.